The chain runs to 88 residues: Small ribosomal subunit protein uS15 (88 aa).

Over residues Met-1–Asp-12 the composition is skewed to basic and acidic residues. The segment at Met-1 to Pro-24 is disordered.

It belongs to the universal ribosomal protein uS15 family. As to quaternary structure, part of the 30S ribosomal subunit. Forms a bridge to the 50S subunit in the 70S ribosome, contacting the 23S rRNA.

Its function is as follows. One of the primary rRNA binding proteins, it binds directly to 16S rRNA where it helps nucleate assembly of the platform of the 30S subunit by binding and bridging several RNA helices of the 16S rRNA. Functionally, forms an intersubunit bridge (bridge B4) with the 23S rRNA of the 50S subunit in the ribosome. In Salinibacter ruber (strain DSM 13855 / M31), this protein is Small ribosomal subunit protein uS15.